The chain runs to 211 residues: Wound-induced protein WIN2 (211 aa).

An N-terminal signal peptide occupies residues M1–A25. The Chitin-binding type-1 domain occupies Q26–G68. 4 disulfides stabilise this stretch: C28/C43, C37/C49, C42/C56, and C62/C66. The Barwin domain occupies G77–D198.

In Solanum tuberosum (Potato), this protein is Wound-induced protein WIN2 (WIN2).